A 200-amino-acid polypeptide reads, in one-letter code: A-type ATP synthase subunit E (200 aa).

It belongs to the V-ATPase E subunit family. In terms of assembly, has multiple subunits with at least A(3), B(3), C, D, E, F, H, I and proteolipid K(x).

It localises to the cell membrane. Functionally, component of the A-type ATP synthase that produces ATP from ADP in the presence of a proton gradient across the membrane. The sequence is that of A-type ATP synthase subunit E from Methanopyrus kandleri (strain AV19 / DSM 6324 / JCM 9639 / NBRC 100938).